The chain runs to 146 residues: Cytochrome c' (146 aa).

An N-terminal signal peptide occupies residues 1–21; that stretch reads MKLRIATIAGLVVLGSGFAVA. Heme c is bound by residues Arg29, Thr86, Ala87, Cys134, Cys137, and His138.

In terms of assembly, monomer. Binds 1 heme c group covalently per subunit.

Cytochrome c' is the most widely occurring bacterial c-type cytochrome. Cytochromes c' are high-spin proteins and the heme has no sixth ligand. Their exact function is not known. This Rhodopseudomonas palustris (strain ATCC BAA-98 / CGA009) protein is Cytochrome c' (cycA).